We begin with the raw amino-acid sequence, 295 residues long: 33 kDa chaperonin (295 aa).

2 disulfide bridges follow: Cys238–Cys240 and Cys271–Cys274.

It belongs to the HSP33 family. Under oxidizing conditions two disulfide bonds are formed involving the reactive cysteines. Under reducing conditions zinc is bound to the reactive cysteines and the protein is inactive.

Its subcellular location is the cytoplasm. Its function is as follows. Redox regulated molecular chaperone. Protects both thermally unfolding and oxidatively damaged proteins from irreversible aggregation. Plays an important role in the bacterial defense system toward oxidative stress. In Clostridium botulinum (strain Eklund 17B / Type B), this protein is 33 kDa chaperonin.